A 550-amino-acid chain; its full sequence is Glucose-6-phosphate isomerase (550 aa).

E356 (proton donor) is an active-site residue. Residues H387 and K515 contribute to the active site.

It belongs to the GPI family.

Its subcellular location is the cytoplasm. It carries out the reaction alpha-D-glucose 6-phosphate = beta-D-fructose 6-phosphate. It functions in the pathway carbohydrate biosynthesis; gluconeogenesis. It participates in carbohydrate degradation; glycolysis; D-glyceraldehyde 3-phosphate and glycerone phosphate from D-glucose: step 2/4. Functionally, catalyzes the reversible isomerization of glucose-6-phosphate to fructose-6-phosphate. This is Glucose-6-phosphate isomerase from Vibrio vulnificus (strain YJ016).